Consider the following 492-residue polypeptide: DEAD-box ATP-dependent RNA helicase RhpA (492 aa).

The Q motif signature appears at 20–48; it reads PSFNDLGLKESVLKSVYEAGFTSPSPIQE. Residues 51 to 220 form the Helicase ATP-binding domain; sequence IPAVLQGRDV…DKILENPIKI (170 aa). 64–71 lines the ATP pocket; it reads AQTGTGKT. The DEAD box motif lies at 168–171; that stretch reads DESD. Residues 231–393 form the Helicase C-terminal domain; sequence DITQRFYVIN…EIPTINENQI (163 aa). The disordered stretch occupies residues 445–492; the sequence is AIQNPKEKTPKPSHKKTPQHERARSFKKGQHRDRHPKTNHHSKKPKRR. Basic residues predominate over residues 469–492; the sequence is SFKKGQHRDRHPKTNHHSKKPKRR.

It belongs to the DEAD box helicase family. As to quaternary structure, homodimer. Interacts with RNase J (rnj), might be a member of a minimal RNA degradosome complex.

The protein resides in the cytoplasm. The enzyme catalyses ATP + H2O = ADP + phosphate + H(+). In terms of biological role, DEAD-box RNA helicase probably involved in RNA degradation. Unwinds dsRNA in both 5'- and 3'-directions. Background RNA-dependent ATPase activity is stimulated about 5-fold by RNaseJ (rnj). Stimulates the dsRNase activity of RNase J. The chain is DEAD-box ATP-dependent RNA helicase RhpA (rhpA) from Helicobacter pylori (strain B128).